A 601-amino-acid polypeptide reads, in one-letter code: DNA topoisomerase I, mitochondrial (601 aa).

The N-terminal 50 residues, 1 to 50 (MRVVRLLRLRAALTLLGEVPRRPASRGVPGSRRTQKGSGARWEKEKHEDG), are a transit peptide targeting the mitochondrion. The tract at residues 22 to 48 (RPASRGVPGSRRTQKGSGARWEKEKHE) is disordered. 3 interaction with DNA regions span residues 261–262 (KY), 324–329 (RAGNEK), and 421–423 (TAK). The 334-residue stretch at 268 to 601 (CSKLKGETAW…LAMAGEDFEF (334 aa)) folds into the Topo IB-type catalytic domain. The O-(3'-phospho-DNA)-tyrosine intermediate role is filled by Tyr559.

It belongs to the type IB topoisomerase family. Requires Ca(2+) as cofactor. It depends on Mg(2+) as a cofactor. As to expression, ubiquitous; highest in skeletal muscle, heart, brain and fetal liver.

It is found in the mitochondrion. The enzyme catalyses ATP-independent breakage of single-stranded DNA, followed by passage and rejoining.. Releases the supercoiling and torsional tension of DNA introduced during duplication of mitochondrial DNA by transiently cleaving and rejoining one strand of the DNA duplex. Introduces a single-strand break via transesterification at a target site in duplex DNA. The scissile phosphodiester is attacked by the catalytic tyrosine of the enzyme, resulting in the formation of a DNA-(3'-phosphotyrosyl)-enzyme intermediate and the expulsion of a 5'-OH DNA strand. The free DNA strand then rotates around the intact phosphodiester bond on the opposing strand, thus removing DNA supercoils. Finally, in the religation step, the DNA 5'-OH attacks the covalent intermediate to expel the active-site tyrosine and restore the DNA phosphodiester backbone. The sequence is that of DNA topoisomerase I, mitochondrial (TOP1MT) from Homo sapiens (Human).